The sequence spans 319 residues: G-protein coupled receptor 55 (319 aa).

Topologically, residues 1–21 (MSQQNTSGDCLFDGVNELMKT) are extracellular. N-linked (GlcNAc...) asparagine glycosylation is present at Asn5. Residues 22-42 (LQFAVHIPTFVLGLLLNLLAI) traverse the membrane as a helical segment. Residues 43 to 58 (HGFSTFLKNRWPDYAA) lie on the Cytoplasmic side of the membrane. Residues 59-79 (TSIYMINLAVFDLLLVLSLPF) traverse the membrane as a helical segment. Residues 80-94 (KMVLSQVQSPFPSLC) are Extracellular-facing. The chain crosses the membrane as a helical span at residues 95 to 115 (TLVECLYFVSMYGSVFTICFI). The Cytoplasmic segment spans residues 116 to 137 (SMDRFLAIRYPLLVSHLRSPRK). The helical transmembrane segment at 138-158 (IFGICCTIWVLVWTGSIPIYS) threads the bilayer. The Extracellular portion of the chain corresponds to 159–180 (FHGKVEKYMCFHNMSDDTWSAK). Residue Asn171 is glycosylated (N-linked (GlcNAc...) asparagine). A helical transmembrane segment spans residues 181–201 (VFFPLEVFGFLLPMGIMGFCC). Topologically, residues 202–231 (SRSIHILLGRRDHTQDWVQQKACIYSIAAS) are cytoplasmic. A helical transmembrane segment spans residues 232 to 252 (LAVFVVSFLPVHLGFFLQFLV). Over 253-271 (RNSFIVECRAKQSISFFLQ) the chain is Extracellular. The helical transmembrane segment at 272–292 (LSMCFSNVNCCLDVFCYYFVI) threads the bilayer. The Cytoplasmic segment spans residues 293–319 (KEFRMNIRAHRPSRVQLVLQDTTISRG).

Belongs to the G-protein coupled receptor 1 family. In terms of tissue distribution, expressed in the caudate nucleus and putamen, but not detected in the hippocampus, thalamus, pons cerebellum, frontal cortex of the brain or in the liver. Expressed in osteoclasts and osteoblasts. Higly expressed in macrophages and B-cells.

The protein localises to the cell membrane. Its function is as follows. G-protein coupled receptor that binds to several ligands including 2-arachidonoyl lysophosphatidylinositol or lysophosphatidylglucoside with high affinity, leading to rapid and transient activation of numerous intracellular signaling pathways. Induces the Ca(2+) release from intracellular stores via ERK, the heterotrimeric G protein GNA13 and RHOA leading to morphological changes including cell rounding and stress fiber formation. In macrophages, acts downstream of lysophosphatidylglucoside to inhibit the translocation of the phospholipid-transporting ABCA1 to plasma membrane and subsequent cholesterol efflux leading to lipid accumulation and foam cell formation. This is G-protein coupled receptor 55 (GPR55) from Homo sapiens (Human).